Reading from the N-terminus, the 265-residue chain is Hemin import ATP-binding protein HmuV (265 aa).

Positions 10 to 247 constitute an ABC transporter domain; the sequence is LVARHLRFQT…ETLAHWYRAD (238 aa). Residue 42-49 participates in ATP binding; the sequence is GPNGAGKS.

Belongs to the ABC transporter superfamily. Heme (hemin) importer (TC 3.A.1.14.5) family. As to quaternary structure, the complex is composed of two ATP-binding proteins (HmuV), two transmembrane proteins (HmuU) and a solute-binding protein (HmuT).

It localises to the cell inner membrane. Part of the ABC transporter complex HmuTUV involved in hemin import. Responsible for energy coupling to the transport system. The sequence is that of Hemin import ATP-binding protein HmuV from Pectobacterium atrosepticum (strain SCRI 1043 / ATCC BAA-672) (Erwinia carotovora subsp. atroseptica).